A 115-amino-acid polypeptide reads, in one-letter code: MARVKRGNVARKRRNKILRLARGFQGSNGSLFRTANQRVMKALCNAYRDRRRRKRDFRRLWIARINAAARINGVSYSRLIGDLKKADVRINRKMLAQLAVMDPKSFTSVVTSAKS.

The protein belongs to the bacterial ribosomal protein bL20 family.

Functionally, binds directly to 23S ribosomal RNA and is necessary for the in vitro assembly process of the 50S ribosomal subunit. It is not involved in the protein synthesizing functions of that subunit. In Prochlorococcus marinus (strain MIT 9303), this protein is Large ribosomal subunit protein bL20.